Here is a 752-residue protein sequence, read N- to C-terminus: Sialidase 85-1.1 (752 aa).

A signal peptide spans 1–23; the sequence is MSRRVFASAVLLLIVVTMCCGGA. 2 BNR repeats span residues 274–285 and 319–330; these read IYSKDNGSTWSL and YVSRDMGTTWTE. The interval 693–725 is disordered; sequence APEPQVKIAPKPAAPAAPAGNEETARETGDGGA. The segment covering 701–711 has biased composition (low complexity); the sequence is APKPAAPAAPA.

It belongs to the glycosyl hydrolase 33 family.

It catalyses the reaction Hydrolysis of alpha-(2-&gt;3)-, alpha-(2-&gt;6)-, alpha-(2-&gt;8)- glycosidic linkages of terminal sialic acid residues in oligosaccharides, glycoproteins, glycolipids, colominic acid and synthetic substrates.. In terms of biological role, developmentally regulated neuraminidase implicated in parasite invasion of cells. May contribute to the pathology during T.cruzi infection by cleaving sialic acid from cells of the immune system. This Trypanosoma cruzi protein is Sialidase 85-1.1 (SA85-1.1).